We begin with the raw amino-acid sequence, 285 residues long: Bis(5'-nucleosyl)-tetraphosphatase, symmetrical (285 aa).

This sequence belongs to the Ap4A hydrolase family.

The enzyme catalyses P(1),P(4)-bis(5'-adenosyl) tetraphosphate + H2O = 2 ADP + 2 H(+). Hydrolyzes diadenosine 5',5'''-P1,P4-tetraphosphate to yield ADP. The protein is Bis(5'-nucleosyl)-tetraphosphatase, symmetrical of Colwellia psychrerythraea (strain 34H / ATCC BAA-681) (Vibrio psychroerythus).